We begin with the raw amino-acid sequence, 330 residues long: Beta-hexosaminidase (330 aa).

Substrate-binding positions include D62, R70, R130, and 160 to 161; that span reads KH. H173 acts as the Proton donor/acceptor in catalysis. D242 acts as the Nucleophile in catalysis.

This sequence belongs to the glycosyl hydrolase 3 family. NagZ subfamily.

Its subcellular location is the cytoplasm. The catalysed reaction is Hydrolysis of terminal non-reducing N-acetyl-D-hexosamine residues in N-acetyl-beta-D-hexosaminides.. The protein operates within cell wall biogenesis; peptidoglycan recycling. In terms of biological role, plays a role in peptidoglycan recycling by cleaving the terminal beta-1,4-linked N-acetylglucosamine (GlcNAc) from peptide-linked peptidoglycan fragments, giving rise to free GlcNAc, anhydro-N-acetylmuramic acid and anhydro-N-acetylmuramic acid-linked peptides. The sequence is that of Beta-hexosaminidase from Vibrio cholerae serotype O1 (strain ATCC 39541 / Classical Ogawa 395 / O395).